We begin with the raw amino-acid sequence, 178 residues long: ATP synthase subunit delta (178 aa).

The protein belongs to the ATPase delta chain family. F-type ATPases have 2 components, F(1) - the catalytic core - and F(0) - the membrane proton channel. F(1) has five subunits: alpha(3), beta(3), gamma(1), delta(1), epsilon(1). F(0) has three main subunits: a(1), b(2) and c(10-14). The alpha and beta chains form an alternating ring which encloses part of the gamma chain. F(1) is attached to F(0) by a central stalk formed by the gamma and epsilon chains, while a peripheral stalk is formed by the delta and b chains.

The protein localises to the cell membrane. In terms of biological role, f(1)F(0) ATP synthase produces ATP from ADP in the presence of a proton or sodium gradient. F-type ATPases consist of two structural domains, F(1) containing the extramembraneous catalytic core and F(0) containing the membrane proton channel, linked together by a central stalk and a peripheral stalk. During catalysis, ATP synthesis in the catalytic domain of F(1) is coupled via a rotary mechanism of the central stalk subunits to proton translocation. Functionally, this protein is part of the stalk that links CF(0) to CF(1). It either transmits conformational changes from CF(0) to CF(1) or is implicated in proton conduction. The protein is ATP synthase subunit delta of Streptococcus thermophilus (strain ATCC BAA-250 / LMG 18311).